Consider the following 455-residue polypeptide: ATP-dependent protease ATPase subunit HslU (455 aa).

Residues isoleucine 19, 61-66 (GVGKTE), aspartate 268, glutamate 333, and arginine 405 contribute to the ATP site.

This sequence belongs to the ClpX chaperone family. HslU subfamily. In terms of assembly, a double ring-shaped homohexamer of HslV is capped on each side by a ring-shaped HslU homohexamer. The assembly of the HslU/HslV complex is dependent on binding of ATP.

It is found in the cytoplasm. Its function is as follows. ATPase subunit of a proteasome-like degradation complex; this subunit has chaperone activity. The binding of ATP and its subsequent hydrolysis by HslU are essential for unfolding of protein substrates subsequently hydrolyzed by HslV. HslU recognizes the N-terminal part of its protein substrates and unfolds these before they are guided to HslV for hydrolysis. This Francisella philomiragia subsp. philomiragia (strain ATCC 25017 / CCUG 19701 / FSC 153 / O#319-036) protein is ATP-dependent protease ATPase subunit HslU.